The primary structure comprises 250 residues: DNA repair protein RecO (250 aa).

This sequence belongs to the RecO family.

Functionally, involved in DNA repair and RecF pathway recombination. The protein is DNA repair protein RecO of Staphylococcus aureus (strain MW2).